We begin with the raw amino-acid sequence, 235 residues long: Purine nucleoside phosphorylase DeoD-type (235 aa).

A purine D-ribonucleoside is bound at residue H4. Residues G20, R24, R43, and 87 to 90 (RVGT) each bind phosphate. A purine D-ribonucleoside contacts are provided by residues 180-182 (EME) and 204-205 (SD). Residue D205 is the Proton donor of the active site.

Belongs to the PNP/UDP phosphorylase family. In terms of assembly, homohexamer; trimer of homodimers.

It carries out the reaction a purine D-ribonucleoside + phosphate = a purine nucleobase + alpha-D-ribose 1-phosphate. It catalyses the reaction a purine 2'-deoxy-D-ribonucleoside + phosphate = a purine nucleobase + 2-deoxy-alpha-D-ribose 1-phosphate. Functionally, catalyzes the reversible phosphorolytic breakdown of the N-glycosidic bond in the beta-(deoxy)ribonucleoside molecules, with the formation of the corresponding free purine bases and pentose-1-phosphate. The polypeptide is Purine nucleoside phosphorylase DeoD-type (Oceanobacillus iheyensis (strain DSM 14371 / CIP 107618 / JCM 11309 / KCTC 3954 / HTE831)).